A 102-amino-acid polypeptide reads, in one-letter code: MPGQKIRIKLKAYDHEVLDESAKKIVEVAKSTNAKISGPIPLPTERALYVVLRSPHKHKDSREQFEKRVHKRLIDIIEPSPKTIDALMKINLPAGVDVEIKL.

It belongs to the universal ribosomal protein uS10 family. Part of the 30S ribosomal subunit.

Its function is as follows. Involved in the binding of tRNA to the ribosomes. The sequence is that of Small ribosomal subunit protein uS10 from Pseudothermotoga lettingae (strain ATCC BAA-301 / DSM 14385 / NBRC 107922 / TMO) (Thermotoga lettingae).